The sequence spans 413 residues: Multifunctional CCA protein (413 aa).

Residues Gly8 and Arg11 each contribute to the ATP site. CTP-binding residues include Gly8 and Arg11. Mg(2+) is bound by residues Glu21 and Asp23. ATP-binding residues include Arg91, Arg137, and Arg140. Positions 91, 137, and 140 each coordinate CTP. One can recognise an HD domain in the interval 228-329; sequence TGEHTLLALA…LKLLEGLDLF (102 aa).

This sequence belongs to the tRNA nucleotidyltransferase/poly(A) polymerase family. Bacterial CCA-adding enzyme type 1 subfamily. Monomer. Can also form homodimers and oligomers. Requires Mg(2+) as cofactor. Ni(2+) serves as cofactor.

The enzyme catalyses a tRNA precursor + 2 CTP + ATP = a tRNA with a 3' CCA end + 3 diphosphate. The catalysed reaction is a tRNA with a 3' CCA end + 2 CTP + ATP = a tRNA with a 3' CCACCA end + 3 diphosphate. Its function is as follows. Catalyzes the addition and repair of the essential 3'-terminal CCA sequence in tRNAs without using a nucleic acid template. Adds these three nucleotides in the order of C, C, and A to the tRNA nucleotide-73, using CTP and ATP as substrates and producing inorganic pyrophosphate. tRNA 3'-terminal CCA addition is required both for tRNA processing and repair. Also involved in tRNA surveillance by mediating tandem CCA addition to generate a CCACCA at the 3' terminus of unstable tRNAs. While stable tRNAs receive only 3'-terminal CCA, unstable tRNAs are marked with CCACCA and rapidly degraded. The protein is Multifunctional CCA protein of Alkalilimnicola ehrlichii (strain ATCC BAA-1101 / DSM 17681 / MLHE-1).